A 127-amino-acid polypeptide reads, in one-letter code: Glycine cleavage system H protein (127 aa).

In terms of domain architecture, Lipoyl-binding spans 22–104; that stretch reads AVVIGITHFA…YEGAWMVKVE (83 aa). The residue at position 63 (Lys63) is an N6-lipoyllysine.

It belongs to the GcvH family. The glycine cleavage system is composed of four proteins: P, T, L and H. (R)-lipoate is required as a cofactor.

The glycine cleavage system catalyzes the degradation of glycine. The H protein shuttles the methylamine group of glycine from the P protein to the T protein. In terms of biological role, is also involved in protein lipoylation via its role as an octanoyl/lipoyl carrier protein intermediate. The polypeptide is Glycine cleavage system H protein (Bacillus mycoides (strain KBAB4) (Bacillus weihenstephanensis)).